We begin with the raw amino-acid sequence, 506 residues long: Maturase K (506 aa).

The protein belongs to the intron maturase 2 family. MatK subfamily.

Its subcellular location is the plastid. It localises to the chloroplast. Usually encoded in the trnK tRNA gene intron. Probably assists in splicing its own and other chloroplast group II introns. This is Maturase K from Medicago sativa (Alfalfa).